A 301-amino-acid chain; its full sequence is MRVYIAHNGCLEAEPIYGTICELVAQRKMSVITDPHARNNESARNTDSGVVSLNQAGRNKYLDQETTSRSINVPFCAGISIGGDGTFLRMARDLKNTGTPLFGVNMGRMGFLVDIEPEDIVNLVENIVKGEYTEEKRLPITASVQRGGKKIHDEWAVNEITIERKVEGKVVDIEVFVDGCRVMDISCNGIIIATATGSTAYSFSSGGPIVWPEMKVTLVVPVSPHELFAKPIVLPDNRSILLKVTSRDNKVVLCSDGQVRLCLQSGDEIACHVGKVPVVFGRVKKGCFAEHLVKKFNLQTA.

Residue D84 is the Proton acceptor of the active site. Residues 84–85 (DG), R89, 158–159 (NE), K169, N188, 199–204 (TAYSFS), and Q258 each bind NAD(+).

It belongs to the NAD kinase family. A divalent metal cation is required as a cofactor.

The protein localises to the cytoplasm. It catalyses the reaction NAD(+) + ATP = ADP + NADP(+) + H(+). Involved in the regulation of the intracellular balance of NAD and NADP, and is a key enzyme in the biosynthesis of NADP. Catalyzes specifically the phosphorylation on 2'-hydroxyl of the adenosine moiety of NAD to yield NADP. The polypeptide is NAD kinase (Tropheryma whipplei (strain Twist) (Whipple's bacillus)).